Here is a 447-residue protein sequence, read N- to C-terminus: Methylenetetrahydrofolate--tRNA-(uracil-5-)-methyltransferase TrmFO (447 aa).

13–18 (GAGLAG) contributes to the FAD binding site.

Belongs to the MnmG family. TrmFO subfamily. FAD serves as cofactor.

The protein localises to the cytoplasm. It carries out the reaction uridine(54) in tRNA + (6R)-5,10-methylene-5,6,7,8-tetrahydrofolate + NADH + H(+) = 5-methyluridine(54) in tRNA + (6S)-5,6,7,8-tetrahydrofolate + NAD(+). The catalysed reaction is uridine(54) in tRNA + (6R)-5,10-methylene-5,6,7,8-tetrahydrofolate + NADPH + H(+) = 5-methyluridine(54) in tRNA + (6S)-5,6,7,8-tetrahydrofolate + NADP(+). Its function is as follows. Catalyzes the folate-dependent formation of 5-methyl-uridine at position 54 (M-5-U54) in all tRNAs. The polypeptide is Methylenetetrahydrofolate--tRNA-(uracil-5-)-methyltransferase TrmFO (Streptococcus thermophilus (strain ATCC BAA-491 / LMD-9)).